A 319-amino-acid polypeptide reads, in one-letter code: Protein SICKLE (319 aa).

Disordered regions lie at residues 1–59, 71–239, and 262–299; these read MEDS…TQRF, SFKK…PGAE, and CSDA…SNQQ. Polar residues-rich tracts occupy residues 27–56 and 78–88; these read TTGT…SFET and PKQQYISSPSH. Pro residues predominate over residues 93 to 103; the sequence is PVPPQFPPSVP. Positions 185 to 210 are enriched in polar residues; it reads SYNNTPPQFSNYGRQNANWGGNTYPN. The segment covering 228 to 238 has biased composition (basic and acidic residues); it reads DGGRRPMEPGA. Positions 285–299 are enriched in polar residues; it reads SVTSEATHKTSSNQQ.

As to quaternary structure, interacts with ubiquitin thioesterases UBP12 and UBP13, and with protein phosphatase 2A subunits PP2AB1, PP2AB2, PP2A3, PP2A4, PP2AA1 and PP2AA2. In terms of tissue distribution, expressed in the shoot apical meristem (SAM), embryos, seedlings, root tips, and root and leaf primordia.

The protein resides in the nucleus. Its subcellular location is the cytoplasm. The protein localises to the cytosol. Its function is as follows. Involved in miRNAs and siRNAs biogenesis and thus promotes gene silencing. Modulates auxin (IAA) transport-related developmental programs by regulating protein phosphatase 2A (PP2As)-driven auxin efflux carrier PIN proteins recycling and polarity. Required during development. Necessary for abiotic stress (e.g. chilling and salt) tolerance. The polypeptide is Protein SICKLE (Arabidopsis thaliana (Mouse-ear cress)).